Consider the following 967-residue polypeptide: Isoleucine--tRNA ligase (967 aa).

The 'HIGH' region signature appears at 68-78 (PYANGTLHMGH). Glutamate 583 is a binding site for L-isoleucyl-5'-AMP. The 'KMSKS' region signature appears at 624–628 (KMSKS). Lysine 627 contacts ATP. Residues cysteine 937, cysteine 940, cysteine 957, and cysteine 960 each contribute to the Zn(2+) site.

This sequence belongs to the class-I aminoacyl-tRNA synthetase family. IleS type 1 subfamily. Monomer. It depends on Zn(2+) as a cofactor.

The protein localises to the cytoplasm. The enzyme catalyses tRNA(Ile) + L-isoleucine + ATP = L-isoleucyl-tRNA(Ile) + AMP + diphosphate. In terms of biological role, catalyzes the attachment of isoleucine to tRNA(Ile). As IleRS can inadvertently accommodate and process structurally similar amino acids such as valine, to avoid such errors it has two additional distinct tRNA(Ile)-dependent editing activities. One activity is designated as 'pretransfer' editing and involves the hydrolysis of activated Val-AMP. The other activity is designated 'posttransfer' editing and involves deacylation of mischarged Val-tRNA(Ile). The protein is Isoleucine--tRNA ligase of Prochlorococcus marinus (strain NATL1A).